A 34-amino-acid polypeptide reads, in one-letter code: Surfactant protein C (34 aa).

The S-palmitoyl cysteine moiety is linked to residue cysteine 4.

The protein localises to the secreted. It localises to the extracellular space. The protein resides in the surface film. Its function is as follows. Pulmonary surfactant associated proteins promote alveolar stability by lowering the surface tension at the air-liquid interface in the peripheral air spaces. The protein is Surfactant protein C (SFTPC) of Canis lupus familiaris (Dog).